The primary structure comprises 108 residues: Small ribosomal subunit protein bS6 (108 aa).

It belongs to the bacterial ribosomal protein bS6 family.

Its function is as follows. Binds together with bS18 to 16S ribosomal RNA. The protein is Small ribosomal subunit protein bS6 of Trichormus variabilis (strain ATCC 29413 / PCC 7937) (Anabaena variabilis).